The following is a 469-amino-acid chain: GTPase Der (469 aa).

2 EngA-type G domains span residues 3–167 (PTVA…PDEV) and 175–348 (PKFA…RAAM). Residues 9–16 (GRPNVGKS), 56–60 (DTGGF), 119–122 (NKAE), 181–188 (GRPNVGKS), 228–232 (DTAGV), and 293–296 (NKWD) contribute to the GTP site. A KH-like domain is found at 349-433 (SKLATPKLTR…PLRVQYKSSE (85 aa)). The disordered stretch occupies residues 429–469 (YKSSENPFDNDEKDKPRAKPKPMSKMRGREKEVRYGKNSKK).

This sequence belongs to the TRAFAC class TrmE-Era-EngA-EngB-Septin-like GTPase superfamily. EngA (Der) GTPase family. Associates with the 50S ribosomal subunit.

In terms of biological role, GTPase that plays an essential role in the late steps of ribosome biogenesis. The protein is GTPase Der of Chromobacterium violaceum (strain ATCC 12472 / DSM 30191 / JCM 1249 / CCUG 213 / NBRC 12614 / NCIMB 9131 / NCTC 9757 / MK).